A 144-amino-acid chain; its full sequence is 3-hydroxyacyl-[acyl-carrier-protein] dehydratase FabZ (144 aa).

Residue H49 is part of the active site.

The protein belongs to the thioester dehydratase family. FabZ subfamily.

The protein localises to the cytoplasm. The enzyme catalyses a (3R)-hydroxyacyl-[ACP] = a (2E)-enoyl-[ACP] + H2O. Functionally, involved in unsaturated fatty acids biosynthesis. Catalyzes the dehydration of short chain beta-hydroxyacyl-ACPs and long chain saturated and unsaturated beta-hydroxyacyl-ACPs. In Clostridium kluyveri (strain NBRC 12016), this protein is 3-hydroxyacyl-[acyl-carrier-protein] dehydratase FabZ.